Reading from the N-terminus, the 190-residue chain is Recombination protein RecR (190 aa).

A C4-type zinc finger spans residues 58–73 (CEQCGALSENELCEIC). A Toprim domain is found at 81–167 (NILCIVESPK…TFSKIAQGIP (87 aa)).

It belongs to the RecR family.

May play a role in DNA repair. It seems to be involved in an RecBC-independent recombinational process of DNA repair. It may act with RecF and RecO. This is Recombination protein RecR from Campylobacter jejuni subsp. jejuni serotype O:23/36 (strain 81-176).